We begin with the raw amino-acid sequence, 236 residues long: NAD-dependent protein deacetylase (236 aa).

The region spanning 1 to 236 is the Deacetylase sirtuin-type domain; the sequence is MIKDWLQESN…EFLRSISNEG (236 aa). Positions 18, 22, 29, 30, 96, 98, 99, and 114 each coordinate NAD(+). Phe-29 contacts nicotinamide. Residues Val-98 and Asp-99 each contribute to the nicotinamide site. The Proton acceptor role is filled by His-114. Cys-122, Cys-125, Cys-141, and Cys-143 together coordinate Zn(2+). NAD(+) is bound by residues Ser-181, Ser-182, Asn-206, and Ile-225.

The protein belongs to the sirtuin family. Class U subfamily. Zn(2+) serves as cofactor.

Its subcellular location is the cytoplasm. The enzyme catalyses N(6)-acetyl-L-lysyl-[protein] + NAD(+) + H2O = 2''-O-acetyl-ADP-D-ribose + nicotinamide + L-lysyl-[protein]. In terms of biological role, NAD-dependent protein deacetylase which modulates the activities of several enzymes which are inactive in their acetylated form. The chain is NAD-dependent protein deacetylase from Oceanobacillus iheyensis (strain DSM 14371 / CIP 107618 / JCM 11309 / KCTC 3954 / HTE831).